The following is a 78-amino-acid chain: DNA-directed RNA polymerase subunit Rpo5 (78 aa).

The protein belongs to the archaeal Rpo5/eukaryotic RPB5 RNA polymerase subunit family. Part of the RNA polymerase complex.

Its subcellular location is the cytoplasm. The catalysed reaction is RNA(n) + a ribonucleoside 5'-triphosphate = RNA(n+1) + diphosphate. DNA-dependent RNA polymerase (RNAP) catalyzes the transcription of DNA into RNA using the four ribonucleoside triphosphates as substrates. The polypeptide is DNA-directed RNA polymerase subunit Rpo5 (Methanothrix thermoacetophila (strain DSM 6194 / JCM 14653 / NBRC 101360 / PT) (Methanosaeta thermophila)).